The chain runs to 325 residues: Mediator of RNA polymerase II transcription subunit 30 (325 aa).

Low complexity-rich tracts occupy residues 1-11 (MWKYGQNQGNQ), 109-122 (PPQQ…MGPQ), and 132-154 (GPQQ…QQQQ). Disordered regions lie at residues 1–26 (MWKY…MMPM) and 109–176 (PPQQ…LAIS). The segment covering 158-169 (GSGGAPGAGGVG) has biased composition (gly residues).

Belongs to the Mediator complex subunit 30 family. As to quaternary structure, component of the Mediator complex.

It is found in the nucleus. Its function is as follows. Component of the Mediator complex, a coactivator involved in the regulated transcription of nearly all RNA polymerase II-dependent genes. Mediator functions as a bridge to convey information from gene-specific regulatory proteins to the basal RNA polymerase II transcription machinery. Mediator is recruited to promoters by direct interactions with regulatory proteins and serves as a scaffold for the assembly of a functional preinitiation complex with RNA polymerase II and the general transcription factors. This Drosophila pseudoobscura pseudoobscura (Fruit fly) protein is Mediator of RNA polymerase II transcription subunit 30 (MED30).